A 260-amino-acid polypeptide reads, in one-letter code: Thiazole synthase (260 aa).

The active-site Schiff-base intermediate with DXP is Lys-102. Residues Gly-163, 189 to 190, and 211 to 212 each bind 1-deoxy-D-xylulose 5-phosphate; these read AG and NT.

The protein belongs to the ThiG family. Homotetramer. Forms heterodimers with either ThiH or ThiS.

Its subcellular location is the cytoplasm. The catalysed reaction is [ThiS sulfur-carrier protein]-C-terminal-Gly-aminoethanethioate + 2-iminoacetate + 1-deoxy-D-xylulose 5-phosphate = [ThiS sulfur-carrier protein]-C-terminal Gly-Gly + 2-[(2R,5Z)-2-carboxy-4-methylthiazol-5(2H)-ylidene]ethyl phosphate + 2 H2O + H(+). The protein operates within cofactor biosynthesis; thiamine diphosphate biosynthesis. Functionally, catalyzes the rearrangement of 1-deoxy-D-xylulose 5-phosphate (DXP) to produce the thiazole phosphate moiety of thiamine. Sulfur is provided by the thiocarboxylate moiety of the carrier protein ThiS. In vitro, sulfur can be provided by H(2)S. The protein is Thiazole synthase of Geobacter sulfurreducens (strain ATCC 51573 / DSM 12127 / PCA).